We begin with the raw amino-acid sequence, 281 residues long: Succinate dehydrogenase [ubiquinone] iron-sulfur subunit 1, mitochondrial (281 aa).

A mitochondrion-targeting transit peptide spans 1-25; it reads MAAAALLRRSPAARALLSPALSSRL. Residues 26–48 are disordered; it reads VASKPHSSSPAPPPPPSKAGANT. A 2Fe-2S ferredoxin-type domain is found at 49–141; sequence KTFSIYRWDP…ASTISPLPHM (93 aa). The [2Fe-2S] cluster site is built by cysteine 102, cysteine 107, and cysteine 122. In terms of domain architecture, 4Fe-4S ferredoxin-type spans 184 to 214; it reads DRAKLDGMYECILCACCSTSCPSYWWNPEEY. Positions 194, 197, and 200 each coordinate [4Fe-4S] cluster. Cysteine 204 provides a ligand contact to [3Fe-4S] cluster. Residue tryptophan 209 coordinates a ubiquinone. Cysteine 251 and cysteine 257 together coordinate [3Fe-4S] cluster. Residue cysteine 261 participates in [4Fe-4S] cluster binding.

It belongs to the succinate dehydrogenase/fumarate reductase iron-sulfur protein family. Component of complex II composed of eight subunits in plants: four classical SDH subunits SDH1, SDH2, SDH3 and SDH4 (a flavoprotein (FP), an iron-sulfur protein (IP), and a cytochrome b composed of a large and a small subunit.), as well as four subunits unknown in mitochondria from bacteria and heterotrophic eukaryotes. Requires [2Fe-2S] cluster as cofactor. [3Fe-4S] cluster is required as a cofactor. [4Fe-4S] cluster serves as cofactor.

The protein localises to the mitochondrion inner membrane. The catalysed reaction is a quinone + succinate = fumarate + a quinol. It participates in carbohydrate metabolism; tricarboxylic acid cycle; fumarate from succinate (eukaryal route): step 1/1. Iron-sulfur protein (IP) subunit of succinate dehydrogenase (SDH) that is involved in complex II of the mitochondrial electron transport chain and is responsible for transferring electrons from succinate to ubiquinone (coenzyme Q). The polypeptide is Succinate dehydrogenase [ubiquinone] iron-sulfur subunit 1, mitochondrial (Oryza sativa subsp. japonica (Rice)).